A 185-amino-acid chain; its full sequence is Ribosome-recycling factor (185 aa).

The protein belongs to the RRF family.

The protein localises to the cytoplasm. Responsible for the release of ribosomes from messenger RNA at the termination of protein biosynthesis. May increase the efficiency of translation by recycling ribosomes from one round of translation to another. This Kineococcus radiotolerans (strain ATCC BAA-149 / DSM 14245 / SRS30216) protein is Ribosome-recycling factor.